The following is a 326-amino-acid chain: DNA-directed RNA polymerase I subunit RPA43 (326 aa).

The tract at residues 179-202 is disordered; that stretch reads VINTDENNGNNNNEDNKDSNGGSN. The span at 182–202 shows a compositional bias: low complexity; it reads TDENNGNNNNEDNKDSNGGSN. A phosphoserine mark is found at Ser-244, Ser-251, Ser-265, Ser-269, and Ser-285. Residues 288–304 are compositionally biased toward basic and acidic residues; it reads NKESHKELDLPEVKEDN. The tract at residues 288–326 is disordered; it reads NKESHKELDLPEVKEDNGSEIVYEENTSESNDGESSDSD. Positions 309-326 are enriched in acidic residues; the sequence is VYEENTSESNDGESSDSD.

This sequence belongs to the eukaryotic RPA43 RNA polymerase subunit family. As to quaternary structure, component of the RNA polymerase I (Pol I) complex consisting of 14 subunits: RPA135, RPA190, RPC40, RPA14, RPB5, RPO26, RPA43, RPB8, RPA12, RPB10, RPC19, RPC10, RPA49 and RPA34. The complex is composed of a horseshoe-shaped core containing ten subunits (RPA135, RPA190, RPB5, RPO26, RPB8, RPB10, RPC10, RPA12, RPC19 and RPC40) where RPA135 and RPA190 form the DNA-binding cleft. Outside of the core, RPA14 and RPA43 form the stalk that mediates interactions with transcription initiation factors and newly synthesized RNA. Interacts with RPO26/ABC23 and with the initiation factor RRN3. Contains an average of four phosphates per molecule.

The protein localises to the nucleus. Its subcellular location is the nucleolus. DNA-dependent RNA polymerases catalyze the transcription of DNA into RNA using the four ribonucleoside triphosphates as substrates. Component of RNA polymerase I (Pol I) which synthesizes ribosomal RNA precursors. Besides, RNA polymerase I has intrinsic RNA cleavage activity. Through its association with RRN3 is involved in recruitment of Pol I to rDNA promoters. In vitro, the A13-A43 subcomplex binds single-stranded RNA. The chain is DNA-directed RNA polymerase I subunit RPA43 (RPA43) from Saccharomyces cerevisiae (strain ATCC 204508 / S288c) (Baker's yeast).